Reading from the N-terminus, the 1235-residue chain is Bromodomain-containing protein 8 (1235 aa).

Lys-85 is modified (N6-acetyllysine). Positions 97–171 (VRKLTAERVE…ATDAAYQARQ (75 aa)) form a coiled coil. Position 124 is a phosphothreonine (Arg-124). Phosphoserine is present on residues Leu-128 and Asp-144. The interval 186 to 205 (RSPIDSASPGGDYPLGDLTP) is disordered. The residue at position 264 (Ala-264) is a Phosphothreonine. A phosphoserine mark is found at Ser-268, Ser-284, Ser-383, and Ser-387. Residue Lys-469 forms a Glycyl lysine isopeptide (Lys-Gly) (interchain with G-Cter in SUMO2) linkage. Lys-481 carries the N6-acetyllysine; alternate modification. A Glycyl lysine isopeptide (Lys-Gly) (interchain with G-Cter in SUMO1); alternate cross-link involves residue Lys-481. Residue Lys-481 forms a Glycyl lysine isopeptide (Lys-Gly) (interchain with G-Cter in SUMO2); alternate linkage. Residues Lys-509 and Lys-575 each participate in a glycyl lysine isopeptide (Lys-Gly) (interchain with G-Cter in SUMO2) cross-link. The tract at residues 551 to 597 (TAAGEIVEADVAIGKGDETPLTNVKTEASPESMLSPSHGSNPIEDPL) is disordered. At Ser-579 the chain carries Phosphoserine. A Glycyl lysine isopeptide (Lys-Gly) (interchain with G-Cter in SUMO2) cross-link involves residue Lys-612. Phosphoserine is present on residues Ser-621, Ser-637, and Ser-641. A disordered region spans residues 621–672 (SQIKDAPGEDEEEDGVSEAASLEEPKEEDQGEGYLSEMDNEPPVSESDDGFS). Positions 706 to 811 (IQAQKIWKKA…RDVLEQIQQF (106 aa)) constitute a Bromo 1 domain. Disordered stretches follow at residues 827-848 (AKSLRGRDSTRKQDASEKDSVP), 903-940 (ETEDPEAEELEESSPEREPSELLVGDGGSEESQEAARK), and 966-999 (ESSEGCCPPSGTRQEGREIKASEGERELCRETEE). Positions 831–846 (RGRDSTRKQDASEKDS) are enriched in basic and acidic residues. A compositionally biased stretch (acidic residues) spans 905-915 (EDPEAEELEES). A Phosphoserine modification is found at Leu-924. A compositionally biased stretch (basic and acidic residues) spans 979–999 (QEGREIKASEGERELCRETEE). The Bromo 2 domain maps to 1099–1207 (DDPVQDHLLF…QEVLEQIQVL (109 aa)).

Component of the NuA4 histone acetyltransferase complex which contains the catalytic subunit KAT5/TIP60 and the subunits EP400, TRRAP/PAF400, BRD8/SMAP, EPC1, DMAP1/DNMAP1, RUVBL1/TIP49, RUVBL2, ING3, actin, ACTL6A/BAF53A, MORF4L1/MRG15, MORF4L2/MRGX, MRGBP, YEATS4/GAS41, VPS72/YL1 and MEAF6. The NuA4 complex interacts with MYC and the adenovirus E1A protein. Component of a NuA4-related complex which contains EP400, TRRAP/PAF400, SRCAP, BRD8/SMAP, EPC1, DMAP1/DNMAP1, RUVBL1/TIP49, RUVBL2, actin, ACTL6A/BAF53A, VPS72 and YEATS4/GAS41. BRD8 isoform 2 interacts with RXRA/NR2B1 and THRB/ERBA2. Component of a SWR1-like complex. Expressed in adipose tissue, brain, heart, kidney, liver, lung, pancreas, placenta and skeletal muscle.

The protein resides in the nucleus. Its function is as follows. May act as a coactivator during transcriptional activation by hormone-activated nuclear receptors (NR). Isoform 2 stimulates transcriptional activation by AR/DHTR, ESR1/NR3A1, RXRA/NR2B1 and THRB/ERBA2. At least isoform 1 and isoform 2 are components of the NuA4 histone acetyltransferase (HAT) complex which is involved in transcriptional activation of select genes principally by acetylation of nucleosomal histones H4 and H2A. This modification may both alter nucleosome - DNA interactions and promote interaction of the modified histones with other proteins which positively regulate transcription. This complex may be required for the activation of transcriptional programs associated with oncogene and proto-oncogene mediated growth induction, tumor suppressor mediated growth arrest and replicative senescence, apoptosis, and DNA repair. NuA4 may also play a direct role in DNA repair when recruited to sites of DNA damage. Component of a SWR1-like complex that specifically mediates the removal of histone H2A.Z/H2AZ1 from the nucleosome. This is Bromodomain-containing protein 8 (BRD8) from Homo sapiens (Human).